The primary structure comprises 354 residues: Hyaluronan and proteoglycan link protein 1 (354 aa).

The propeptide occupies 1–15 (MKSLLLLVLISFCWA). N-linked (GlcNAc...) asparagine glycans are attached at residues N21 and N56. The Ig-like V-type domain maps to 38–152 (PRLLVEAEQA…EGLEDDTAVV (115 aa)). Intrachain disulfides connect C61/C139, C181/C252, C205/C226, C279/C349, and C304/C325. Link domains are found at residues 159-254 (VVFP…FCFT) and 259-351 (GRFY…YCFR).

It belongs to the HAPLN family.

Its subcellular location is the secreted. The protein resides in the extracellular space. The protein localises to the extracellular matrix. Its function is as follows. Stabilizes the aggregates of proteoglycan monomers with hyaluronic acid in the extracellular cartilage matrix. The sequence is that of Hyaluronan and proteoglycan link protein 1 (HAPLN1) from Bos taurus (Bovine).